The primary structure comprises 251 residues: Imidazole glycerol phosphate synthase subunit HisF (251 aa).

Residues Asp12 and Asp131 contribute to the active site.

It belongs to the HisA/HisF family. In terms of assembly, heterodimer of HisH and HisF.

The protein resides in the cytoplasm. It catalyses the reaction 5-[(5-phospho-1-deoxy-D-ribulos-1-ylimino)methylamino]-1-(5-phospho-beta-D-ribosyl)imidazole-4-carboxamide + L-glutamine = D-erythro-1-(imidazol-4-yl)glycerol 3-phosphate + 5-amino-1-(5-phospho-beta-D-ribosyl)imidazole-4-carboxamide + L-glutamate + H(+). Its pathway is amino-acid biosynthesis; L-histidine biosynthesis; L-histidine from 5-phospho-alpha-D-ribose 1-diphosphate: step 5/9. Its function is as follows. IGPS catalyzes the conversion of PRFAR and glutamine to IGP, AICAR and glutamate. The HisF subunit catalyzes the cyclization activity that produces IGP and AICAR from PRFAR using the ammonia provided by the HisH subunit. This chain is Imidazole glycerol phosphate synthase subunit HisF, found in Streptomyces griseus subsp. griseus (strain JCM 4626 / CBS 651.72 / NBRC 13350 / KCC S-0626 / ISP 5235).